A 315-amino-acid chain; its full sequence is Alpha- and gamma-adaptin-binding protein p34 (315 aa).

A disordered region spans residues 197-233; sequence IGSADPCHPEQPHLPAADRTESLSDHRGGASNTTDAQ. Over residues 203–224 the composition is skewed to basic and acidic residues; sequence CHPEQPHLPAADRTESLSDHRG. Phosphoserine is present on residues Ser310 and Ser311.

In terms of assembly, associated with AP-1 and AP-2 complexes.

Its subcellular location is the cytoplasm. The protein localises to the cytosol. Its function is as follows. May be involved in endocytic recycling of growth factor receptors such as EGFR. The sequence is that of Alpha- and gamma-adaptin-binding protein p34 (AAGAB) from Pongo abelii (Sumatran orangutan).